A 965-amino-acid chain; its full sequence is Phosphoenolpyruvate carboxylase 1 (965 aa).

Ser11 carries the post-translational modification Phosphoserine. His172 is an active-site residue. Residues Trp283, Arg450, and Asp597 each coordinate D-glucose 6-phosphate. Residue Lys600 is part of the active site. Arg635 serves as a coordination point for D-glucose 6-phosphate. Residue Arg641 is part of the active site. Position 641 (Arg641) interacts with L-aspartate. Thr665 contributes to the D-glucose 6-phosphate binding site. Gln673 contributes to the L-aspartate binding site. D-glucose 6-phosphate-binding positions include Arg753 and 767–769 (RAI). Residues Lys829, Arg888, and Asn963 each contribute to the L-aspartate site.

This sequence belongs to the PEPCase type 1 family. As to quaternary structure, homotetramer. The cofactor is Mg(2+). In terms of tissue distribution, expressed in roots and stems and at low levels in leaves. Preferentially expressed in the phloem and in root tips.

It is found in the cytoplasm. It carries out the reaction oxaloacetate + phosphate = phosphoenolpyruvate + hydrogencarbonate. Its activity is regulated as follows. Activated by the allosteric regulator glucose-6-phosphate. Inhibited by malate and aspartate. Up regulated by light-reversible phosphorylation. Functionally, through the carboxylation of phosphoenolpyruvate (PEP) it forms oxaloacetate, a four-carbon dicarboxylic acid source for the tricarboxylic acid cycle. May be involved in phloem loading with sucrose and in anions and cations uptake and amino acid biosynthesis in roots. This is Phosphoenolpyruvate carboxylase 1 from Flaveria trinervia (Clustered yellowtops).